We begin with the raw amino-acid sequence, 330 residues long: Aspartate--ammonia ligase (330 aa).

Belongs to the class-II aminoacyl-tRNA synthetase family. AsnA subfamily.

The protein resides in the cytoplasm. The catalysed reaction is L-aspartate + NH4(+) + ATP = L-asparagine + AMP + diphosphate + H(+). It participates in amino-acid biosynthesis; L-asparagine biosynthesis; L-asparagine from L-aspartate (ammonia route): step 1/1. The chain is Aspartate--ammonia ligase from Streptococcus pyogenes serotype M1.